The primary structure comprises 252 residues: Triosephosphate isomerase (252 aa).

Position 10 to 12 (10 to 12 (NWK)) interacts with substrate. Catalysis depends on His96, which acts as the Electrophile. Glu168 acts as the Proton acceptor in catalysis. Substrate contacts are provided by residues Gly174, Ser214, and 235-236 (GG).

It belongs to the triosephosphate isomerase family. Homodimer.

The protein resides in the cytoplasm. It carries out the reaction D-glyceraldehyde 3-phosphate = dihydroxyacetone phosphate. It participates in carbohydrate biosynthesis; gluconeogenesis. The protein operates within carbohydrate degradation; glycolysis; D-glyceraldehyde 3-phosphate from glycerone phosphate: step 1/1. Its function is as follows. Involved in the gluconeogenesis. Catalyzes stereospecifically the conversion of dihydroxyacetone phosphate (DHAP) to D-glyceraldehyde-3-phosphate (G3P). This is Triosephosphate isomerase from Streptococcus pyogenes serotype M1.